An 875-amino-acid chain; its full sequence is MDMASLISSLLVLFLIFQNSCYCFRSPLSVFKRYEESTRSLSNDCLGTTRPVMSPGSSDYTLDIRMPGVTPTESDTYLCKSYRLPVDDEAYVVDYRPHANMDTAHHMLLFGCNVPSSTDDYWDCSAGTCNDKSSIMYAWAKNAPPTKLPEGVGFQVGGKSGSRYFVLQVHYGDVKAFQDKHKDCTGVTVRITPEKQPLIAGIYLSMSLNTVVPPGQEVVNSDIACLYNRPTIHPFAYRVHTHQLGQVVSGFRVRHGKWTLIGRQSPQLPQAFYPVEHPLEISPGDIIATRCLFTGKGRMSATYIGGTAKDEMCNLYIMYYMDAAHATSYMTCVQTGNPKLFENIPEIANVPIPVSPDMMMMMMMGHGHHHTEAEAETNTALQQPKREEEEVLNQDVHLEEDTDWPGVNLKVGQVSGLALDPKNNLVIFHRGDHVWDENSFDRNFVYQQRGIGPIQESTILVVDPNTSKVLKSTGQNLFFLPHGLTIDRDGNYWVTDVALHQVFKVGAEKETPLLVLGRAFQPGSDRKHFCQPTDVAVDPITGNFFVADGYCNSRIMQFSPNGMFIMQWGEETSSNLPRPGQFRIPHSLTMISDQGQLCVADRENGRIQCFHAKTGEFVKQIKHQEFGREVFAVSYAPGGVLYAVNGKPYYGDSTPVQGFMLNFSNGDILDTFIPARKNFEMPHDIAAGDDGTVYVGDAHANAVWKFSPSKAEHRSVKKAGIEVEEITETEIFETHMRSRPKTNESVGQQTQEKPSVVQESSAGVSFVLIITLLIIPVVVLIAIAIFIRWRKVRMYGGDIGHKSESSSGGILGKLRGKGSGGLNLGTFFATHKGYSRKGFDRLSTEGSDQEKDDDDDGSDSEEEYSAPPIPPVSSS.

The first 39 residues, 1–39, serve as a signal peptide directing secretion; it reads MDMASLISSLLVLFLIFQNSCYCFRSPLSVFKRYEESTR. The peptidylglycine alpha-hydroxylating monooxygenase stretch occupies residues 3 to 394; the sequence is MASLISSLLV…KREEEEVLNQ (392 aa). The Intragranular portion of the chain corresponds to 40 to 763; that stretch reads SLSNDCLGTT…PSVVQESSAG (724 aa). Intrachain disulfides connect cysteine 45–cysteine 184, cysteine 79–cysteine 124, cysteine 112–cysteine 129, cysteine 225–cysteine 332, and cysteine 291–cysteine 313. 2 residues coordinate Cu(2+): histidine 105 and histidine 106. Histidine 170, histidine 240, histidine 242, and methionine 312 together coordinate Cu(2+). The peptidyl-alpha-hydroxyglycine alpha-amidating lyase stretch occupies residues 395-716; it reads DVHLEEDTDW…SPSKAEHRSV (322 aa). Arginine 430 contributes to the a protein binding site. N-linked (GlcNAc...) asparagine glycosylation is present at asparagine 465. NHL repeat units lie at residues 467 to 508, 516 to 561, and 569 to 613; these read SKVL…VGAE, LGRA…FSPN, and GEET…FHAK. Intrachain disulfides connect cysteine 530–cysteine 551 and cysteine 598–cysteine 609. 2 residues coordinate a protein: tyrosine 550 and arginine 602. N-linked (GlcNAc...) asparagine glycosylation occurs at asparagine 662. Residues 666–709 form an NHL 4 repeat; that stretch reads GDILDTFIPARKNFEMPHDIAAGDDGTVYVGDAHANAVWKFSPS. Residues 735–755 are disordered; sequence HMRSRPKTNESVGQQTQEKPS. A glycan (N-linked (GlcNAc...) asparagine) is linked at asparagine 743. Positions 743 to 755 are enriched in polar residues; sequence NESVGQQTQEKPS. A helical transmembrane segment spans residues 764 to 787; it reads VSFVLIITLLIIPVVVLIAIAIFI. The Cytoplasmic portion of the chain corresponds to 788–875; the sequence is RWRKVRMYGG…APPIPPVSSS (88 aa). The tract at residues 837 to 875 is disordered; sequence KGFDRLSTEGSDQEKDDDDDGSDSEEEYSAPPIPPVSSS. Residues 850-864 show a composition bias toward acidic residues; it reads EKDDDDDGSDSEEEY.

It in the C-terminal section; belongs to the peptidyl-alpha-hydroxyglycine alpha-amidating lyase family. The protein in the N-terminal section; belongs to the copper type II ascorbate-dependent monooxygenase family. In terms of assembly, monomer. Requires Zn(2+) as cofactor. The cofactor is Cu(2+).

It localises to the cytoplasmic vesicle. The protein resides in the secretory vesicle membrane. It carries out the reaction a [peptide]-C-terminal glycine + 2 L-ascorbate + O2 = a [peptide]-C-terminal (2S)-2-hydroxyglycine + 2 monodehydro-L-ascorbate radical + H2O. It catalyses the reaction a [peptide]-C-terminal (2S)-2-hydroxyglycine = a [peptide]-C-terminal amide + glyoxylate. In terms of biological role, bifunctional enzyme that catalyzes amidation of the C-terminus of proteins. Alpha-amidation is present at the C-terminus of many endocrine hormones and neuropeptides and is required for their activity. C-terminal amidation also takes place in response to protein fragmentation triggered by oxidative stress, promoting degradation of amidated protein fragments by the proteasome. Alpha-amidation involves two sequential reactions, both of which are catalyzed by separate catalytic domains of the enzyme. The first step, catalyzed by peptidyl alpha-hydroxylating monooxygenase (PHM) domain, is the copper-, ascorbate-, and O2- dependent stereospecific hydroxylation (with S stereochemistry) at the alpha-carbon (C-alpha) of the C-terminal glycine of the peptidylglycine substrate. The second step, catalyzed by the peptidylglycine amidoglycolate lyase (PAL) domain, is the zinc-dependent cleavage of the N-C-alpha bond, producing the alpha-amidated peptide and glyoxylate. This is Peptidyl-glycine alpha-amidating monooxygenase B (pam-b) from Xenopus laevis (African clawed frog).